A 141-amino-acid polypeptide reads, in one-letter code: Nucleoside diphosphate kinase (141 aa).

ATP is bound by residues K11, F59, R87, T93, R104, and N114. Catalysis depends on H117, which acts as the Pros-phosphohistidine intermediate.

It belongs to the NDK family. In terms of assembly, homotetramer. Requires Mg(2+) as cofactor.

It localises to the cytoplasm. The enzyme catalyses a 2'-deoxyribonucleoside 5'-diphosphate + ATP = a 2'-deoxyribonucleoside 5'-triphosphate + ADP. The catalysed reaction is a ribonucleoside 5'-diphosphate + ATP = a ribonucleoside 5'-triphosphate + ADP. In terms of biological role, major role in the synthesis of nucleoside triphosphates other than ATP. The ATP gamma phosphate is transferred to the NDP beta phosphate via a ping-pong mechanism, using a phosphorylated active-site intermediate. The sequence is that of Nucleoside diphosphate kinase from Leptothrix cholodnii (strain ATCC 51168 / LMG 8142 / SP-6) (Leptothrix discophora (strain SP-6)).